Consider the following 241-residue polypeptide: Demethylmenaquinone methyltransferase (241 aa).

S-adenosyl-L-methionine is bound by residues Thr73 and Asp92.

The protein belongs to the class I-like SAM-binding methyltransferase superfamily. MenG/UbiE family.

The catalysed reaction is a 2-demethylmenaquinol + S-adenosyl-L-methionine = a menaquinol + S-adenosyl-L-homocysteine + H(+). Its pathway is quinol/quinone metabolism; menaquinone biosynthesis; menaquinol from 1,4-dihydroxy-2-naphthoate: step 2/2. Its function is as follows. Methyltransferase required for the conversion of demethylmenaquinol (DMKH2) to menaquinol (MKH2). The protein is Demethylmenaquinone methyltransferase of Chlorobaculum parvum (strain DSM 263 / NCIMB 8327) (Chlorobium vibrioforme subsp. thiosulfatophilum).